A 560-amino-acid chain; its full sequence is MAKIISFDEESRRALERGVNALADAVKITLGPKGRNVLLEKKYGTPQIVNDGITVAKEIELEDPLENTGARLIQEVASKTKDVAGDGTTTATVLVQALIREGLKNVAAGTNPVSLKRGIDKTTEALVAEIAKVAKPVEGSAIAQVATVSSGNDEEVGAMIAQAVEKVTKDGVITVEESKSLTTELEVVEGMQIDRGYISPYFITNNERQTVELENVRILITDKKISSIQELVPVLEKVARLGQPLLIIAEDVEGDALATLVVNKARGVLSVAAIKAPGFGERRKALLQDIAILTDGQLISEEIGLSLDTASLEALGTAQKITIEKDNTTIVAGNTTKPEIQKRIAQIRRQLEETDSEYDSEKLQERIAKLAGGIAVIKVGAATETELKDRKLRIEDALNATKAAVAEGIVPGGGKTLIYLASKVDEIKKNFDEEEKIGADIVKRALEAPLRQIADNAGAEGSVIVSRVKDSDFNIGYNAATGEFEDLIAAGIIDPAKVVRSALQNAASIAGLVLTTEAIVVEKPEKKSAAPADAGMGGMGGMGGMGGMGGMGGMGGMGMF.

Residues threonine 29–proline 32, aspartate 86–threonine 90, glycine 413, asparagine 478–alanine 480, and aspartate 494 contribute to the ATP site.

It belongs to the chaperonin (HSP60) family. As to quaternary structure, forms a cylinder of 14 subunits composed of two heptameric rings stacked back-to-back. Interacts with the co-chaperonin GroES.

Its subcellular location is the cytoplasm. The catalysed reaction is ATP + H2O + a folded polypeptide = ADP + phosphate + an unfolded polypeptide.. In terms of biological role, together with its co-chaperonin GroES, plays an essential role in assisting protein folding. The GroEL-GroES system forms a nano-cage that allows encapsulation of the non-native substrate proteins and provides a physical environment optimized to promote and accelerate protein folding. The sequence is that of Chaperonin GroEL 2 from Nostoc sp. (strain PCC 7120 / SAG 25.82 / UTEX 2576).